An 863-amino-acid polypeptide reads, in one-letter code: Cilia- and flagella-associated protein 58 (863 aa).

2 coiled-coil regions span residues 107–600 (TVKE…NERD) and 631–815 (QSQY…KQVF). The segment at 836-863 (GPSLLDQLPGGSGTGSGGMATGGGVGMS) is disordered. Over residues 845 to 863 (GGSGTGSGGMATGGGVGMS) the composition is skewed to gly residues.

The protein belongs to the CFAP58 family.

It localises to the cell projection. The protein resides in the cilium. The protein localises to the flagellum. This is Cilia- and flagella-associated protein 58 from Chlamydomonas reinhardtii (Chlamydomonas smithii).